The following is a 363-amino-acid chain: Dioxygenase sphC (363 aa).

3 residues coordinate Fe cation: H183, D185, and H259.

It belongs to the PhyH family. Homodimer. It depends on Fe cation as a cofactor.

The enzyme catalyses sphingofungin B1 + 2-oxoglutarate + O2 = sphingofungin B + succinate + CO2. It functions in the pathway secondary metabolite biosynthesis. In terms of biological role, dioxygenase; part of the gene cluster that mediates the biosynthesis of sphingofungins, bioactive molecules acting as sphingolipid inhibitors via inhibiting serine palmitoyl transferase (SPT). Within the pathway, sphC catalyzes the hydrolxylation at C-4 to convert sphingofungin B1 into sphingofungin B as well as presphingofungin into sphingofungin B2. Sphingofungin biosynthesis starts with the PKS sphB that produces an C18 polyketide precursor 3-hydroxyoctadeca-4,10-dienoyl-ACP containing one delta-6 desaturation and one delta-12 desaturation. The aminoacyl transferase sphA uses the sphB product to produce 3-keto-presphingofungin by adding an aminomalonate molecule. SphF then reduces the C-3 ketone of 3-keto-presphingofungin which leads to presphingofungin. The cytochrome P450 monooxygenase sphH converts presphingofungin into sphingofungin B1 which is further converted to sphingofungin B by the dioxygenase sphC. SphC is also able to convert presphingofungin into sphingofungin B2. The acetyltransferase sphE acetylates sphingofungin B to produce sphingofungin C, but can also convert sphingofungin B1 into sphingofungin C1 and sphingofungin B2 into sphingofungin C2. Finally, sphingofungin C can be spontaneously converted into sphingofungin D. This Aspergillus fumigatus (strain CBS 144.89 / FGSC A1163 / CEA10) (Neosartorya fumigata) protein is Dioxygenase sphC.